The primary structure comprises 547 residues: Chaperonin GroEL (547 aa).

ATP is bound by residues 30-33, K51, 87-91, G415, 479-481, and D495; these read TLGP, DGTTT, and NAA. Residues 526–547 form a disordered region; the sequence is KEEKSDLSVPPQGGMGGMGGMM. A compositionally biased stretch (gly residues) spans 538-547; that stretch reads GGMGGMGGMM.

Belongs to the chaperonin (HSP60) family. As to quaternary structure, forms a cylinder of 14 subunits composed of two heptameric rings stacked back-to-back. Interacts with the co-chaperonin GroES.

It is found in the cytoplasm. It carries out the reaction ATP + H2O + a folded polypeptide = ADP + phosphate + an unfolded polypeptide.. In terms of biological role, together with its co-chaperonin GroES, plays an essential role in assisting protein folding. The GroEL-GroES system forms a nano-cage that allows encapsulation of the non-native substrate proteins and provides a physical environment optimized to promote and accelerate protein folding. In Buchnera aphidicola subsp. Tetraneura caerulescens, this protein is Chaperonin GroEL.